A 137-amino-acid chain; its full sequence is Endoribonuclease YbeY (137 aa).

Zn(2+) contacts are provided by His107, His111, and Asp117.

This sequence belongs to the endoribonuclease YbeY family. Zn(2+) serves as cofactor.

It localises to the cytoplasm. In terms of biological role, single strand-specific metallo-endoribonuclease involved in late-stage 70S ribosome quality control and in maturation of the 3' terminus of the 16S rRNA. The protein is Endoribonuclease YbeY of Bacteroides thetaiotaomicron (strain ATCC 29148 / DSM 2079 / JCM 5827 / CCUG 10774 / NCTC 10582 / VPI-5482 / E50).